Reading from the N-terminus, the 410-residue chain is Probable 2,3-bisphosphoglycerate-independent phosphoglycerate mutase (410 aa).

Belongs to the BPG-independent phosphoglycerate mutase family. A-PGAM subfamily.

It carries out the reaction (2R)-2-phosphoglycerate = (2R)-3-phosphoglycerate. It functions in the pathway carbohydrate degradation; glycolysis; pyruvate from D-glyceraldehyde 3-phosphate: step 3/5. Catalyzes the interconversion of 2-phosphoglycerate and 3-phosphoglycerate. The protein is Probable 2,3-bisphosphoglycerate-independent phosphoglycerate mutase of Deinococcus radiodurans (strain ATCC 13939 / DSM 20539 / JCM 16871 / CCUG 27074 / LMG 4051 / NBRC 15346 / NCIMB 9279 / VKM B-1422 / R1).